The following is a 343-amino-acid chain: Methionine import ATP-binding protein MetN 1 (343 aa).

In terms of domain architecture, ABC transporter spans isoleucine 2 to isoleucine 241. Glycine 38–serine 45 contributes to the ATP binding site.

This sequence belongs to the ABC transporter superfamily. Methionine importer (TC 3.A.1.24) family. The complex is composed of two ATP-binding proteins (MetN), two transmembrane proteins (MetI) and a solute-binding protein (MetQ).

The protein localises to the cell inner membrane. It carries out the reaction L-methionine(out) + ATP + H2O = L-methionine(in) + ADP + phosphate + H(+). It catalyses the reaction D-methionine(out) + ATP + H2O = D-methionine(in) + ADP + phosphate + H(+). In terms of biological role, part of the ABC transporter complex MetNIQ involved in methionine import. Responsible for energy coupling to the transport system. The chain is Methionine import ATP-binding protein MetN 1 from Salmonella typhimurium (strain LT2 / SGSC1412 / ATCC 700720).